Consider the following 576-residue polypeptide: Arginine--tRNA ligase (576 aa).

Positions 122-132 (PNVAKQMHVGH) match the 'HIGH' region motif.

The protein belongs to the class-I aminoacyl-tRNA synthetase family. Monomer.

It is found in the cytoplasm. It carries out the reaction tRNA(Arg) + L-arginine + ATP = L-arginyl-tRNA(Arg) + AMP + diphosphate. The chain is Arginine--tRNA ligase from Proteus mirabilis (strain HI4320).